A 271-amino-acid chain; its full sequence is Phosphate import ATP-binding protein PstB (271 aa).

In terms of domain architecture, ABC transporter spans 24–266 (MIGKDVSVYY…PDDQRTQDYI (243 aa)). 56–63 (GPSGCGKS) serves as a coordination point for ATP.

It belongs to the ABC transporter superfamily. Phosphate importer (TC 3.A.1.7) family. The complex is composed of two ATP-binding proteins (PstB), two transmembrane proteins (PstC and PstA) and a solute-binding protein (PstS).

The protein resides in the cell inner membrane. The catalysed reaction is phosphate(out) + ATP + H2O = ADP + 2 phosphate(in) + H(+). Part of the ABC transporter complex PstSACB involved in phosphate import. Responsible for energy coupling to the transport system. The sequence is that of Phosphate import ATP-binding protein PstB from Agrobacterium fabrum (strain C58 / ATCC 33970) (Agrobacterium tumefaciens (strain C58)).